Here is a 1792-residue protein sequence, read N- to C-terminus: Brefeldin A-inhibited guanine nucleotide-exchange protein 2 (1792 aa).

N-acetylmethionine is present on Met-1. Residues 2 to 224 (QESQTKSMFV…KPQSPVIQAT (223 aa)) form a DCB; DCB:DCB domain and DCB:HUS domain interaction region. The tract at residues 207–294 (ELEKPMQSKP…SRGTDSGAQE (88 aa)) is disordered. Phosphoserine is present on residues Ser-214, Ser-218, and Ser-227. The span at 214-225 (SKPQSPVIQATA) shows a compositional bias: polar residues. A compositionally biased stretch (polar residues) spans 233–243 (LKQSQAQSKPT). A Phosphothreonine modification is found at Thr-244. Residues Ser-355 and Ser-356 each carry the phosphoserine modification. Residues 515-535 (ADAQCVVDIYVNYDCDLNAAN) are HUS; DCB:HUS domain interaction. Ser-621 carries the phosphoserine modification. Position 623 is a phosphothreonine (Thr-623). A Phosphoserine modification is found at Ser-624. Thr-633 carries the post-translational modification Phosphothreonine. Residues 661-792 (FNKKPKRGIQ…IIMLTTDLHS (132 aa)) form the SEC7 domain. A phosphoserine mark is found at Ser-707, Ser-1518, Ser-1520, Ser-1521, Ser-1532, Ser-1535, Ser-1541, and Ser-1789.

Homodimer. Interacts with ARFGEF1/BIG1; both proteins are probably part of the same or very similar macromolecular complexes. Interacts with PRKAR1A, PRKAR2A, PRKAR1B, PRKAR2B, PPP1CC, PDE3A, TNFRSF1A, MYCBP and EXOC7. Interacts with GABRB1, GABRB2 and GABRB3. In vitro phosphorylated by PKA reducing its GEF activity and dephosphorylated by phosphatase PP1.

Its subcellular location is the cytoplasm. It localises to the membrane. It is found in the golgi apparatus. The protein localises to the perinuclear region. The protein resides in the trans-Golgi network. Its subcellular location is the endosome. It localises to the cytoskeleton. It is found in the microtubule organizing center. The protein localises to the centrosome. The protein resides in the cell projection. Its subcellular location is the dendrite. It localises to the cytoplasmic vesicle. It is found in the synapse. Inhibited by brefeldin A. Promotes guanine-nucleotide exchange on ARF1 and ARF3 and to a lower extent on ARF5 and ARF6. Promotes the activation of ARF1/ARF5/ARF6 through replacement of GDP with GTP. Involved in the regulation of Golgi vesicular transport. Required for the integrity of the endosomal compartment. Involved in trafficking from the trans-Golgi network (TGN) to endosomes and is required for membrane association of the AP-1 complex and GGA1. Seems to be involved in recycling of the transferrin receptor from recycling endosomes to the plasma membrane. Probably is involved in the exit of GABA(A) receptors from the endoplasmic reticulum. Involved in constitutive release of tumor necrosis factor receptor 1 via exosome-like vesicles; the function seems to involve PKA and specifically PRKAR2B. Proposed to act as A kinase-anchoring protein (AKAP) and may mediate crosstalk between Arf and PKA pathways. This Mus musculus (Mouse) protein is Brefeldin A-inhibited guanine nucleotide-exchange protein 2 (Arfgef2).